A 315-amino-acid polypeptide reads, in one-letter code: Adenine deaminase (315 aa).

Zn(2+) contacts are provided by His14, His16, and His194. Glu197 functions as the Proton donor in the catalytic mechanism. Asp275 lines the Zn(2+) pocket. Residue Asp276 coordinates substrate.

Belongs to the metallo-dependent hydrolases superfamily. Adenosine and AMP deaminases family. Adenine deaminase type 2 subfamily. Requires Zn(2+) as cofactor.

It carries out the reaction adenine + H2O + H(+) = hypoxanthine + NH4(+). Its function is as follows. Catalyzes the hydrolytic deamination of adenine to hypoxanthine. Plays an important role in the purine salvage pathway and in nitrogen catabolism. The sequence is that of Adenine deaminase from Pseudomonas putida (strain ATCC 47054 / DSM 6125 / CFBP 8728 / NCIMB 11950 / KT2440).